A 520-amino-acid chain; its full sequence is Acetylcholine receptor subunit delta (520 aa).

A signal peptide spans 1-24; that stretch reads MAGPVLTLGLLAALVVCALPGSWG. At 25-248 the chain is on the extracellular side; sequence LNEEQRLIQH…VTFYLIIRRK (224 aa). N-linked (GlcNAc...) asparagine glycans are attached at residues asparagine 100, asparagine 167, and asparagine 193. A disulfide bridge links cysteine 154 with cysteine 168. 3 consecutive transmembrane segments (helical) span residues 249-273, 281-299, and 315-336; these read PLFY…VFYL, TSVA…LLIS, and FLLF…VLNI. Residues 337 to 474 are Cytoplasmic-facing; the sequence is HFRTPSTHVL…WNQVARTVDR (138 aa). A Phosphotyrosine; by Tyr-kinases modification is found at tyrosine 393. Residues 475–493 traverse the membrane as a helical segment; it reads LCLFVVTPVMVVGTAWIFL.

Belongs to the ligand-gated ion channel (TC 1.A.9) family. Acetylcholine receptor (TC 1.A.9.1) subfamily. Delta/CHRND sub-subfamily. Pentamer of two alpha chains, and one each of the beta, delta, and gamma (in immature muscle) or epsilon (in mature muscle) chains. The muscle heteropentamer composed of alpha-1, beta-1, delta, epsilon subunits interacts with the alpha-conotoxin ImII.

The protein resides in the postsynaptic cell membrane. It localises to the cell membrane. The catalysed reaction is K(+)(in) = K(+)(out). It carries out the reaction Na(+)(in) = Na(+)(out). Its function is as follows. After binding acetylcholine, the AChR responds by an extensive change in conformation that affects all subunits and leads to opening of an ion-conducting channel across the plasma membrane. The protein is Acetylcholine receptor subunit delta (Chrnd) of Mus musculus (Mouse).